Reading from the N-terminus, the 154-residue chain is Ribosomal RNA large subunit methyltransferase H (154 aa).

S-adenosyl-L-methionine contacts are provided by residues L76, G103, and 122-127; that span reads LSPLTL.

Belongs to the RNA methyltransferase RlmH family. In terms of assembly, homodimer.

It is found in the cytoplasm. The catalysed reaction is pseudouridine(1915) in 23S rRNA + S-adenosyl-L-methionine = N(3)-methylpseudouridine(1915) in 23S rRNA + S-adenosyl-L-homocysteine + H(+). Functionally, specifically methylates the pseudouridine at position 1915 (m3Psi1915) in 23S rRNA. In Wolinella succinogenes (strain ATCC 29543 / DSM 1740 / CCUG 13145 / JCM 31913 / LMG 7466 / NCTC 11488 / FDC 602W) (Vibrio succinogenes), this protein is Ribosomal RNA large subunit methyltransferase H.